Reading from the N-terminus, the 1331-residue chain is Retrotransposon-like protein 1 (1331 aa).

Disordered regions lie at residues 1-123 (MMEP…SQED), 128-147 (TDLA…SSTV), 556-595 (EADE…ETFY), and 971-1033 (PSSE…DEPN). A compositionally biased stretch (low complexity) spans 19–30 (SSKQMESSEGSS). Composition is skewed to acidic residues over residues 109 to 123 (EMEE…SQED), 128 to 143 (TDLA…EEPD), and 569 to 578 (GSDDLSESEP). Residues 992 to 1001 (RRVATTTRPT) show a composition bias toward low complexity. The segment covering 1015–1024 (PESEDEEESE) has biased composition (acidic residues). A run of 2 helical transmembrane segments spans residues 1070–1090 (FYRS…LVML) and 1117–1137 (LFLD…TQLF). The tract at residues 1309 to 1331 (SPPREGATLEELPSDADEDAGLD) is disordered. Over residues 1320 to 1331 (LPSDADEDAGLD) the composition is skewed to acidic residues.

It localises to the membrane. Its function is as follows. Plays an essential role in capillaries endothelial cells for the maintenance of feto-maternal interface and for development of the placenta. This Bos taurus (Bovine) protein is Retrotransposon-like protein 1 (RTL1).